A 232-amino-acid chain; its full sequence is LexA repressor (232 aa).

The tract at residues Met1 to Arg25 is disordered. Over residues Arg16 to Arg25 the composition is skewed to basic and acidic residues. A DNA-binding region (H-T-H motif) is located at residues Ile46–Arg66. Active-site for autocatalytic cleavage activity residues include Ser156 and Lys193.

It belongs to the peptidase S24 family. As to quaternary structure, homodimer.

It catalyses the reaction Hydrolysis of Ala-|-Gly bond in repressor LexA.. Its function is as follows. Represses a number of genes involved in the response to DNA damage (SOS response), including recA and lexA. In the presence of single-stranded DNA, RecA interacts with LexA causing an autocatalytic cleavage which disrupts the DNA-binding part of LexA, leading to derepression of the SOS regulon and eventually DNA repair. The protein is LexA repressor of Mycolicibacterium gilvum (strain PYR-GCK) (Mycobacterium gilvum (strain PYR-GCK)).